A 1182-amino-acid chain; its full sequence is Rho GTPase-activating protein 20 (1182 aa).

The interval 1-40 (MEAMSPQQDALGAQPGRSSSLTGMSRIAGGPGTKKKMKTL) is disordered. Residue S46 is modified to Phosphoserine. The 102-residue stretch at 86 to 187 (LLIDGPVELK…SLLQRYIALE (102 aa)) folds into the PH domain. One can recognise a Ras-associating domain in the interval 194–283 (KSIPLKIFAK…TALLTQGSKD (90 aa)). Residues 365-551 (VSLPDICEND…FLIENCCRIF (187 aa)) enclose the Rho-GAP domain. A phosphoserine mark is found at S704 and S730. Disordered stretches follow at residues 744 to 791 (KQTQ…IQET), 932 to 953 (ASYSSLSSPGTSPSGSSVSSQD), 981 to 1009 (QRKQEELSSDCDSPSLVSGMPGPSTGQAS), and 1140 to 1182 (EESG…GDRH). Polar residues predominate over residues 757 to 775 (FKQSSVTGTDVSKRNTANE). The segment covering 933–953 (SYSSLSSPGTSPSGSSVSSQD) has biased composition (low complexity).

In terms of tissue distribution, highest expression is found in testis. Ubiquitously expressed in extragonadal tissues.

GTPase activator for the Rho-type GTPases by converting them to an inactive GDP-bound state. The protein is Rho GTPase-activating protein 20 (Arhgap20) of Rattus norvegicus (Rat).